The chain runs to 730 residues: Dual function macrocyclase-peptidase POPB (730 aa).

Residues serine 577, aspartate 661, and histidine 698 each act as charge relay system in the active site.

It belongs to the peptidase S9A family. As to quaternary structure, monomer. Expressed in the pileus (cap) and lamellae where it colocalizes with amanitin.

It catalyses the reaction Hydrolysis of Pro-|-Xaa &gt;&gt; Ala-|-Xaa in oligopeptides.. Functionally, dual function macrocyclase-peptidase involved in the biosynthesis of the highly toxic amanitin toxin family of macrocycles. Cleaves peptide bonds on the C-terminal side of prolyl residues. The enzyme first removes 10 residues from the N-terminus of a 35-residue substrate. Conformational trapping of the 25 amino-acid peptide forces the enzyme to release this intermediate rather than proceed to macrocyclization. The enzyme rebinds the 25 amino-acid peptide in a different conformation and catalyzes macrocyclization of the N-terminal eight residues. The protein is Dual function macrocyclase-peptidase POPB of Amanita bisporigera (Destroying angel).